A 295-amino-acid polypeptide reads, in one-letter code: Bifunctional protein FolD (295 aa).

NADP(+)-binding positions include 164–166 (GRS), Ser-193, and Ile-234.

This sequence belongs to the tetrahydrofolate dehydrogenase/cyclohydrolase family. As to quaternary structure, homodimer.

The enzyme catalyses (6R)-5,10-methylene-5,6,7,8-tetrahydrofolate + NADP(+) = (6R)-5,10-methenyltetrahydrofolate + NADPH. It catalyses the reaction (6R)-5,10-methenyltetrahydrofolate + H2O = (6R)-10-formyltetrahydrofolate + H(+). It functions in the pathway one-carbon metabolism; tetrahydrofolate interconversion. Its function is as follows. Catalyzes the oxidation of 5,10-methylenetetrahydrofolate to 5,10-methenyltetrahydrofolate and then the hydrolysis of 5,10-methenyltetrahydrofolate to 10-formyltetrahydrofolate. The sequence is that of Bifunctional protein FolD from Flavobacterium johnsoniae (strain ATCC 17061 / DSM 2064 / JCM 8514 / BCRC 14874 / CCUG 350202 / NBRC 14942 / NCIMB 11054 / UW101) (Cytophaga johnsonae).